The sequence spans 646 residues: Anoctamin-10 (646 aa).

The next 8 membrane-spanning stretches (helical) occupy residues 210–230, 241–261, 314–334, 357–377, 404–424, 502–522, 557–577, and 592–612; these read LYFG…LIGI, DKYV…LEVW, IYLV…YVMM, VLLF…NLLY, VLVF…FVMQ, FLLF…AVLV, LAFE…IALS, and ILTV…LAFV.

It belongs to the anoctamin family.

The protein localises to the membrane. In terms of biological role, does not exhibit calcium-activated chloride channel (CaCC) activity. Can inhibit the activity of ANO1. This Danio rerio (Zebrafish) protein is Anoctamin-10 (ano10).